Here is a 157-residue protein sequence, read N- to C-terminus: Lipoprotein signal peptidase (157 aa).

The next 4 membrane-spanning stretches (helical) occupy residues 10 to 30 (FIFI…KYAI), 36 to 56 (YESS…FSLL), 58 to 78 (FLEG…FIFL), and 84 to 104 (LFKA…SNIL). Active-site residues include Asp-114 and Asp-131. A helical membrane pass occupies residues 123-143 (DFAIFNFADVMIDVGVGVLLI).

The protein belongs to the peptidase A8 family.

The protein localises to the cell inner membrane. The enzyme catalyses Release of signal peptides from bacterial membrane prolipoproteins. Hydrolyzes -Xaa-Yaa-Zaa-|-(S,diacylglyceryl)Cys-, in which Xaa is hydrophobic (preferably Leu), and Yaa (Ala or Ser) and Zaa (Gly or Ala) have small, neutral side chains.. It functions in the pathway protein modification; lipoprotein biosynthesis (signal peptide cleavage). Functionally, this protein specifically catalyzes the removal of signal peptides from prolipoproteins. The polypeptide is Lipoprotein signal peptidase (Helicobacter acinonychis (strain Sheeba)).